The chain runs to 96 residues: uncharacterized protein (96 aa).

The chain crosses the membrane as a helical span at residues 53 to 71 (VLLMPLLQSFVLSLALMGV).

Its subcellular location is the membrane. This is an uncharacterized protein from Saccharomyces cerevisiae (strain ATCC 204508 / S288c) (Baker's yeast).